The following is a 372-amino-acid chain: Chloroplast protein FOR GROWTH AND FERTILITY 2 (372 aa).

Residues 1–20 (MDRLLQPPSSHSIAPSKFQS) form a disordered region. The N-terminal 78 residues, 1–78 (MDRLLQPPSS…NQSSNFLIAS (78 aa)), are a transit peptide targeting the chloroplast. A compositionally biased stretch (polar residues) spans 7 to 20 (PPSSHSIAPSKFQS). Transmembrane regions (helical) follow at residues 109 to 129 (VILV…PPAF), 161 to 181 (FFAG…LAPL), 195 to 215 (ALWG…FLLL), 231 to 251 (VVGL…SEMP), 281 to 301 (GIVH…LALP), 309 to 329 (FLIM…VFIG), and 352 to 372 (LVAI…FSLY).

Mostly expressed in leaves, stems and flowers, to a lower extent, in roots, floral bud, inflorescence and siliques, and, barely, in seedlings.

Its subcellular location is the plastid. It localises to the chloroplast membrane. The protein localises to the plastid membrane. Its function is as follows. Together with CGF1, essential protein which supports female gametogenesis and embryogenesis, probably by securing local energy supply. The polypeptide is Chloroplast protein FOR GROWTH AND FERTILITY 2 (Arabidopsis thaliana (Mouse-ear cress)).